Reading from the N-terminus, the 257-residue chain is 1-(5-phosphoribosyl)-5-[(5-phosphoribosylamino)methylideneamino] imidazole-4-carboxamide isomerase (257 aa).

Catalysis depends on Asp-8, which acts as the Proton acceptor. The active-site Proton donor is Asp-130.

The protein belongs to the HisA/HisF family.

It localises to the cytoplasm. It carries out the reaction 1-(5-phospho-beta-D-ribosyl)-5-[(5-phospho-beta-D-ribosylamino)methylideneamino]imidazole-4-carboxamide = 5-[(5-phospho-1-deoxy-D-ribulos-1-ylimino)methylamino]-1-(5-phospho-beta-D-ribosyl)imidazole-4-carboxamide. It participates in amino-acid biosynthesis; L-histidine biosynthesis; L-histidine from 5-phospho-alpha-D-ribose 1-diphosphate: step 4/9. This is 1-(5-phosphoribosyl)-5-[(5-phosphoribosylamino)methylideneamino] imidazole-4-carboxamide isomerase from Chlorobium chlorochromatii (strain CaD3).